We begin with the raw amino-acid sequence, 757 residues long: Zinc finger CCCH domain-containing protein 5 (757 aa).

Positions Met-1–Asp-127 are disordered. A compositionally biased stretch (basic and acidic residues) spans His-13–Arg-35. The span at Lys-36–Val-50 shows a compositional bias: basic residues. Residues Arg-51–Asp-127 are compositionally biased toward basic and acidic residues. Residues Glu-240–Pro-268 form a C3H1-type 1 zinc finger. Residues Tyr-295–Ile-372 enclose the RRM domain. Residues Arg-374–Arg-404 form a C3H1-type 2 zinc finger. Residues His-441–Val-757 are disordered. The segment covering Ser-444–Ser-455 has biased composition (polar residues). Residues Tyr-487–Pro-546 are compositionally biased toward basic and acidic residues. Composition is skewed to basic residues over residues Gly-547–Gly-557 and Lys-600–Ser-609. Composition is skewed to basic and acidic residues over residues Arg-610–His-634, Arg-644–Val-672, and Ser-681–Lys-721. Residues Glu-722–Thr-733 show a composition bias toward basic residues.

The protein is Zinc finger CCCH domain-containing protein 5 of Arabidopsis thaliana (Mouse-ear cress).